The sequence spans 320 residues: Na(+)-translocating NADH-quinone reductase subunit C (320 aa).

The helical transmembrane segment at 16–36 (WYIVSFILGLSLFAGVLLSTI) threads the bilayer. Residue T285 is modified to FMN phosphoryl threonine.

Belongs to the NqrC family. In terms of assembly, composed of six subunits; NqrA, NqrB, NqrC, NqrD, NqrE and NqrF. Requires FMN as cofactor.

The protein resides in the cell inner membrane. The catalysed reaction is a ubiquinone + n Na(+)(in) + NADH + H(+) = a ubiquinol + n Na(+)(out) + NAD(+). Its function is as follows. NQR complex catalyzes the reduction of ubiquinone-1 to ubiquinol by two successive reactions, coupled with the transport of Na(+) ions from the cytoplasm to the periplasm. NqrA to NqrE are probably involved in the second step, the conversion of ubisemiquinone to ubiquinol. This Chlamydia pneumoniae (Chlamydophila pneumoniae) protein is Na(+)-translocating NADH-quinone reductase subunit C.